The primary structure comprises 203 residues: Probable Tat proofreading chaperone DmsD (203 aa).

It belongs to the TorD/DmsD family. DmsD subfamily.

In terms of biological role, required for biogenesis/assembly of DMSO reductase, but not for the interaction of the DmsA signal peptide with the Tat system. May be part of a chaperone cascade complex that facilitates a folding-maturation pathway for the substrate protein. This chain is Probable Tat proofreading chaperone DmsD, found in Haemophilus influenzae (strain ATCC 51907 / DSM 11121 / KW20 / Rd).